Consider the following 261-residue polypeptide: Kallikrein-1 (261 aa).

Residues 1–18 (MRFLILFLALSLGGIDAA) form the signal peptide. A propeptide spans 19–24 (PPVQSR) (activation peptide). The Peptidase S1 domain maps to 25–258 (IVGGFNCEKN…FNTWIRETMA (234 aa)). Disulfide bonds link Cys-31/Cys-173, Cys-50/Cys-66, Cys-152/Cys-219, Cys-184/Cys-198, and Cys-209/Cys-234. Residue His-65 is the Charge relay system of the active site. Asn-102 carries N-linked (GlcNAc...) asparagine glycosylation. Asp-120 acts as the Charge relay system in catalysis. Ser-213 serves as the catalytic Charge relay system.

This sequence belongs to the peptidase S1 family. Kallikrein subfamily.

It carries out the reaction Preferential cleavage of Arg-|-Xaa bonds in small molecule substrates. Highly selective action to release kallidin (lysyl-bradykinin) from kininogen involves hydrolysis of Met-|-Xaa or Leu-|-Xaa.. Its function is as follows. Glandular kallikreins cleave Met-Lys and Arg-Ser bonds in kininogen to release Lys-bradykinin. The chain is Kallikrein-1 (Klk1) from Mus musculus (Mouse).